We begin with the raw amino-acid sequence, 284 residues long: MTDHYPSPRALLDRYDLRAKKSWGQNFLGDEAVLDDIARLAAPRAGDAVLELGAGLGHLTARLLARGARVAAVERDRDMVRVLRGELGDRITLLEADAARLDYADLAARFGAAAAAGEGPRLAVVGNLPYHLTSPILFSILDQVAHVSRAVFLLQREVAERLAAPPASRDWGVLSVLLQREADVSVERIVPPGAFWPPPKVASAVLCALFRPPADAVADPARFRRLVKAGFGQRRKTLRNALGSAKLADPARLEAAFAAAGVDPGRRGETLTLAEWAALERTLG.

The S-adenosyl-L-methionine site is built by asparagine 26, leucine 28, glycine 53, glutamate 74, aspartate 97, and asparagine 127.

The protein belongs to the class I-like SAM-binding methyltransferase superfamily. rRNA adenine N(6)-methyltransferase family. RsmA subfamily.

The protein resides in the cytoplasm. It catalyses the reaction adenosine(1518)/adenosine(1519) in 16S rRNA + 4 S-adenosyl-L-methionine = N(6)-dimethyladenosine(1518)/N(6)-dimethyladenosine(1519) in 16S rRNA + 4 S-adenosyl-L-homocysteine + 4 H(+). Its function is as follows. Specifically dimethylates two adjacent adenosines (A1518 and A1519) in the loop of a conserved hairpin near the 3'-end of 16S rRNA in the 30S particle. May play a critical role in biogenesis of 30S subunits. This is Ribosomal RNA small subunit methyltransferase A from Anaeromyxobacter dehalogenans (strain 2CP-1 / ATCC BAA-258).